Consider the following 415-residue polypeptide: Ubp4-interactor sfp47 (415 aa).

2 positions are modified to phosphoserine: Ser221 and Ser226. Thr231 is modified (phosphothreonine). Position 235 is a phosphoserine (Ser235). The SH3 domain occupies 352 to 415 (PIFAYVRALY…PSNYIEELEY (64 aa)).

Interacts with ubp4.

The protein localises to the cytoplasm. It is found in the endosome. Its function is as follows. Required for the regulation of activity and recruitment of ubp4 to endosomes. The sequence is that of Ubp4-interactor sfp47 (sfp47) from Schizosaccharomyces pombe (strain 972 / ATCC 24843) (Fission yeast).